The chain runs to 249 residues: ATP synthase subunit a (249 aa).

The next 6 membrane-spanning stretches (helical) occupy residues 30–50 (SAYM…GVAG), 84–104 (FFPL…VGII), 114–134 (LIVT…YGFY), 143–163 (IFVP…IEVF), 196–216 (LLAG…GMVI), and 221–241 (LELL…CIYL).

The protein belongs to the ATPase A chain family. F-type ATPases have 2 components, CF(1) - the catalytic core - and CF(0) - the membrane proton channel. CF(1) has five subunits: alpha(3), beta(3), gamma(1), delta(1), epsilon(1). CF(0) has four main subunits: a, b, b' and c.

It is found in the cell inner membrane. Key component of the proton channel; it plays a direct role in the translocation of protons across the membrane. In Rhodopseudomonas palustris (strain BisB18), this protein is ATP synthase subunit a.